The sequence spans 588 residues: Aspartate--tRNA ligase (588 aa).

Glu177 contacts L-aspartate. An aspartate region spans residues 201–204; it reads QLFK. Arg223 is an L-aspartate binding site. ATP is bound by residues 223–225 and Gln232; that span reads RDE. His451 is a binding site for L-aspartate. Glu485 provides a ligand contact to ATP. Residue Arg492 participates in L-aspartate binding. 537–540 serves as a coordination point for ATP; sequence GLDR.

This sequence belongs to the class-II aminoacyl-tRNA synthetase family. Type 1 subfamily. As to quaternary structure, homodimer.

It is found in the cytoplasm. It carries out the reaction tRNA(Asp) + L-aspartate + ATP = L-aspartyl-tRNA(Asp) + AMP + diphosphate. Functionally, catalyzes the attachment of L-aspartate to tRNA(Asp) in a two-step reaction: L-aspartate is first activated by ATP to form Asp-AMP and then transferred to the acceptor end of tRNA(Asp). The polypeptide is Aspartate--tRNA ligase (Staphylococcus aureus (strain Newman)).